A 208-amino-acid chain; its full sequence is Large ribosomal subunit protein bL9 (208 aa).

The tract at residues 161–208 (KKRKIEKEVEEGSGTSVDESLKLDSVSDSIDTSGVNSSDKEEENNIIE) is disordered. Polar residues predominate over residues 186-197 (VSDSIDTSGVNS).

Belongs to the bacterial ribosomal protein bL9 family.

Functionally, binds to the 23S rRNA. The chain is Large ribosomal subunit protein bL9 from Ehrlichia canis (strain Jake).